The primary structure comprises 242 residues: Biosynthetic peptidoglycan transglycosylase (242 aa).

A helical membrane pass occupies residues 19–39 (LMVVLAVFWGGGIALFSVAPV).

It belongs to the glycosyltransferase 51 family.

The protein localises to the cell inner membrane. It carries out the reaction [GlcNAc-(1-&gt;4)-Mur2Ac(oyl-L-Ala-gamma-D-Glu-L-Lys-D-Ala-D-Ala)](n)-di-trans,octa-cis-undecaprenyl diphosphate + beta-D-GlcNAc-(1-&gt;4)-Mur2Ac(oyl-L-Ala-gamma-D-Glu-L-Lys-D-Ala-D-Ala)-di-trans,octa-cis-undecaprenyl diphosphate = [GlcNAc-(1-&gt;4)-Mur2Ac(oyl-L-Ala-gamma-D-Glu-L-Lys-D-Ala-D-Ala)](n+1)-di-trans,octa-cis-undecaprenyl diphosphate + di-trans,octa-cis-undecaprenyl diphosphate + H(+). Its pathway is cell wall biogenesis; peptidoglycan biosynthesis. Its function is as follows. Peptidoglycan polymerase that catalyzes glycan chain elongation from lipid-linked precursors. The chain is Biosynthetic peptidoglycan transglycosylase from Escherichia coli (strain 55989 / EAEC).